Reading from the N-terminus, the 1406-residue chain is Inactive tyrosine-protein kinase PRAG1 (1406 aa).

Ser148 bears the Phosphoserine mark. The span at 184 to 193 (EEKAVHKEKP) shows a compositional bias: basic and acidic residues. 2 disordered regions span residues 184 to 205 (EEKA…STQE) and 217 to 248 (TTSG…SGDS). Residues Tyr253, Tyr365, and Tyr413 each carry the phosphotyrosine modification. 2 disordered regions span residues 372–470 (PAPE…TPQV) and 484–854 (DHRT…HSET). Over residues 526-542 (RESHAHSASESKPKERP) the composition is skewed to basic and acidic residues. Over residues 546–576 (PKLSKSSPVGSPVSPSAGGPPVSPLADLSDG) the composition is skewed to low complexity. 2 stretches are compositionally biased toward polar residues: residues 660–671 (NGPTDHSNSTTW) and 678–695 (DGSS…SKSA). Residues Ser696 and Ser745 each carry the phosphoserine modification. Composition is skewed to polar residues over residues 737–746 (SQGSAESLSP) and 754–770 (SFTT…SRTC). Ser782 bears the Phosphoserine mark. Positions 798–808 (SGSTEDVSPSG) are enriched in polar residues. The residue at position 826 (Ser826) is a Phosphoserine. Positions 933–976 (STQLQLHGLLSNISSKEGTYAKLGGLYTQSLARLVAKCEDLFMG) are required for homodimerization. The Protein kinase domain occupies 978–1329 (QKKELHFNEN…EAKRVLQCLL (352 aa)). Pro residues predominate over residues 1163-1173 (GPAPAPAPAPA). A disordered region spans residues 1163–1206 (GPAPAPAPAPAPAAAAPPCSSAAPPAGGTLSPAAGPASPEGPRE). The span at 1174–1202 (PAAAAPPCSSAAPPAGGTLSPAAGPASPE) shows a compositional bias: low complexity. The segment at 1331–1406 (GPRRELVQQP…LQSLKLLQLL (76 aa)) is required for homodimerization.

Belongs to the protein kinase superfamily. In terms of assembly, homodimer. Dimerization leads to the catalytic activation of CSK. Interacts (via C-terminus) with RND2. Interacts with CSK (via SH2 domain) in a Tyr-413 phosphorylation-dependent manner; this interaction potentiates kinase activity of CSK. Interacts with PEAK1. Interacts with NOTCH1 intracellular domain (N1ICD). Forms a complex with N1ICD and MAML1, in a MAML1-dependent manner. In terms of processing, phosphorylated by CSK on Tyr-253, Tyr-365, and Tyr-413; Tyr-413 is a primary site of phosphorylation.

The protein localises to the cytoplasm. Its subcellular location is the cell junction. The protein resides in the focal adhesion. It localises to the nucleus. Its function is as follows. Catalytically inactive protein kinase that acts as a scaffold protein. Functions as an effector of the small GTPase RND2, which stimulates RhoA activity and inhibits NGF-induced neurite outgrowth. Promotes Src family kinase (SFK) signaling by regulating the subcellular localization of CSK, a negative regulator of these kinases, leading to the regulation of cell morphology and motility by a CSK-dependent mechanism. Acts as a critical coactivator of Notch signaling. The sequence is that of Inactive tyrosine-protein kinase PRAG1 from Homo sapiens (Human).